Consider the following 254-residue polypeptide: Casein kinase II subunit beta-2 (254 aa).

It belongs to the casein kinase 2 subunit beta family. In terms of assembly, tetramer composed of two alpha chains, one beta chain and one beta' chain. Phosphorylated by alpha subunit.

Functionally, regulatory subunit of casein kinase II/CK2. As part of the kinase complex regulates the basal catalytic activity of the alpha subunit a constitutively active serine/threonine-protein kinase that phosphorylates a large number of substrates containing acidic residues C-terminal to the phosphorylated serine or threonine. The protein is Casein kinase II subunit beta-2 of Schizosaccharomyces pombe (strain 972 / ATCC 24843) (Fission yeast).